Here is a 398-residue protein sequence, read N- to C-terminus: Mitochondrial protein import protein mas5 (398 aa).

The J domain maps to 7 to 88 (GYYKVLELSP…KKKKEYDSGM (82 aa)). The CR-type zinc-finger motif lies at 139 to 219 (GKVSKFNVRT…CNGAEYIQDK (81 aa)). 144 to 146 (FNV) contributes to the substrate binding site. Residues C152, C155, C166, C169, C192, C195, C207, and C210 each coordinate Zn(2+). CXXCXGXG motif repeat units lie at residues 152-159 (CTTCDGKG), 166-173 (CKKCNGNG), 192-199 (CDGCDGSG), and 207-214 (CSTCNGAE). Residues 221 to 222 (MF) and 253 to 255 (VIF) each bind substrate. The tract at residues 367–386 (FGSMPEPERDHEDASEEGAQ) is disordered.

This sequence belongs to the DnaJ family. Homodimer. Zn(2+) serves as cofactor.

The protein resides in the cytoplasm. Functionally, probably involved in mitosomal protein import. The protein is Mitochondrial protein import protein mas5 (MAS5) of Encephalitozoon cuniculi (strain GB-M1) (Microsporidian parasite).